The following is a 1039-amino-acid chain: Integrin alpha-4 (1039 aa).

An N-terminal signal peptide occupies residues Met1–Ser40. Residues Tyr41–Phe983 lie on the Extracellular side of the membrane. FG-GAP repeat units lie at residues Asn42–Thr107, Ser117–Ser184, Asp193–Ala244, Val246–Leu298, Asn299–Met358, Glu362–Ser419, and Gln423–Ser485. 3 N-linked (GlcNAc...) asparagine glycosylation sites follow: Asn86, Asn105, and Asn145. Cysteines 98 and 108 form a disulfide. Intrachain disulfides connect Cys151–Cys172 and Cys190–Cys205. Residue Asn236 is glycosylated (N-linked (GlcNAc...) asparagine). Ca(2+) contacts are provided by Asp321, Asn323, Asp325, Asp329, Asp384, Asp386, Asp388, Asp392, Asp446, Asp448, Asn450, Tyr452, and Asp454. The N-linked (GlcNAc...) asparagine glycan is linked to Asn487. Cystine bridges form between Cys493-Cys502 and Cys508-Cys564. N-linked (GlcNAc...) asparagine glycosylation is found at Asn525 and Asn545. The SG1 signature appears at Lys613–Ile623. Cys629 and Cys634 are oxidised to a cystine. N-linked (GlcNAc...) asparagine glycosylation is found at Asn633, Asn652, and Asn667. A disulfide bond links Cys705 and Cys718. Asn813 and Asn828 each carry an N-linked (GlcNAc...) asparagine glycan. 2 disulfides stabilise this stretch: Cys859–Cys897 and Cys904–Cys909. The chain crosses the membrane as a helical span at residues Thr984–Trp1007. Residues Lys1008–Asp1039 are Cytoplasmic-facing. The GFFKR motif signature appears at Gly1010 to Arg1014. Ser1028 is modified (phosphoserine).

The protein belongs to the integrin alpha chain family. Heterodimer of an alpha and a beta subunit. The alpha subunit can sometimes be cleaved into two non-covalently associated fragments. Alpha-4 associates with either beta-1 or beta-7. Alpha-4 interacts with PXN, LPXN, and TGFB1I1/HIC5. Interacts with CSPG4 through CSPG4 chondroitin sulfate glycosaminoglycan. Interacts with JAML; integrin alpha-4/beta-1 may regulate leukocyte to endothelial cells adhesion by controlling JAML homodimerization. ITGA4:ITGB1 is found in a ternary complex with CX3CR1 and CX3CL1. Interacts with MDK. ITGA4:ITGB1 interacts with MDK; this interaction mediates MDK-induced osteoblast cells migration through PXN phosphorylation. Integrin ITGA4:ITGB1 interacts with SVEP1 (via Sushi domain 21); thereby inhibits Ca(2+) intracellular signaling and as a result represses vasocontraction. ITGA4:ITGB1 interacts with SELP. ITGA4:ITGB1 interacts with BCAM. Phosphorylation on Ser-1028 inhibits PXN binding. As to expression, expressed in the media layer of the arterial wall (at protein level). Weakly expression in the thymus, spleen and mesenteric lymph nodes.

The protein localises to the membrane. Integrins alpha-4/beta-1 (VLA-4 or LPAM-2) and alpha-4/beta-7 (LPAM-1) are receptors for fibronectin. They recognize one or more domains within the alternatively spliced CS-1 and CS-5 regions of fibronectin. They are also receptors for VCAM1. Integrin alpha-4/beta-1 recognizes the sequence Q-I-D-S in VCAM1. Integrin alpha-4/beta-7 is also a receptor for MADCAM1. It recognizes the sequence L-D-T in MADCAM1. On activated endothelial cells integrin VLA-4 triggers homotypic aggregation for most VLA-4-positive leukocyte cell lines. It may also participate in cytolytic T-cell interactions with target cells. ITGA4:ITGB1 binds to fractalkine (CX3CL1) and may act as its coreceptor in CX3CR1-dependent fractalkine signaling. ITGA4:ITGB1 binds to PLA2G2A via a site (site 2) which is distinct from the classical ligand-binding site (site 1) and this induces integrin conformational changes and enhanced ligand binding to site 1. Integrin ITGA4:ITGB1 represses PRKCA-mediated L-type voltage-gated channel Ca(2+) influx and ROCK-mediated calcium sensitivity in vascular smooth muscle cells via its interaction with SVEP1, thereby inhibiting vasocontraction. In Mus musculus (Mouse), this protein is Integrin alpha-4 (Itga4).